Consider the following 392-residue polypeptide: Large ribosomal subunit protein uL3 (392 aa).

The protein belongs to the universal ribosomal protein uL3 family.

The protein localises to the cytoplasm. In terms of biological role, the L3 protein is a component of the large subunit of cytoplasmic ribosomes. The sequence is that of Large ribosomal subunit protein uL3 (rpl3) from Aspergillus fumigatus (strain ATCC MYA-4609 / CBS 101355 / FGSC A1100 / Af293) (Neosartorya fumigata).